Reading from the N-terminus, the 566-residue chain is E3 ubiquitin-protein ligase RNF220 (566 aa).

Lys277 is covalently cross-linked (Glycyl lysine isopeptide (Lys-Gly) (interchain with G-Cter in SUMO2)). Positions 277 to 297 (KREGESPTASPHSSATDDLHH) are disordered. Position 390 is a phosphoserine (Ser390). Residues 485–513 (EDSAVTTFEALKARVRELERQLSRGDRYK) adopt a coiled-coil conformation. The interval 514 to 522 (CLICMDSYS) is required for targeting to the cytoplasm. Residues 514-553 (CLICMDSYSMPLTSIQCWHVHCEECWLRTLGAKKLCPQCN) form an RING-type zinc finger.

Interacts with SIN3B. Interacts with CTNNB1 (via Armadillo repeats 2-8). Interacts with USP7 (via MATH domain). In terms of processing, auto-ubiquitinated; leads to proteasomal degradation. As to expression, ubiquitously expressed. Abundant in brain and spinal cord, particularly in the cerebellum and cerebral cortex. In fetal tissues expressed in the cerebellum, spinal cord and cortex.

It is found in the cytoplasm. Its subcellular location is the nucleus. It carries out the reaction S-ubiquitinyl-[E2 ubiquitin-conjugating enzyme]-L-cysteine + [acceptor protein]-L-lysine = [E2 ubiquitin-conjugating enzyme]-L-cysteine + N(6)-ubiquitinyl-[acceptor protein]-L-lysine.. The protein operates within protein modification; protein ubiquitination. E3 ubiquitin-protein ligase that promotes the ubiquitination and proteasomal degradation of SIN3B. Independently of its E3 ligase activity, acts as a CTNNB1 stabilizer through USP7-mediated deubiquitination of CTNNB1 promoting Wnt signaling. Plays a critical role in the regulation of nuclear lamina. The chain is E3 ubiquitin-protein ligase RNF220 (RNF220) from Homo sapiens (Human).